The primary structure comprises 513 residues: MNKKPVMLMILDGFGITNHEDGNAVKMANKPNFDKLLREYPHTQLKASGLNVGLPEGQMGNSEVGHLNIGSGRVIYQELTRITKDINDGVFFENTEINYAIDEAIKNNSSLHLLGLLSDGGVHSHIDHLKAILKLAKDKGLNRVYVHAFLDGRDVPPSSAKEYIINIENYMKELSVGQIATLAGRYYAMDRDKRWERVELAYNALVYGTGELSNSAVEAIEKSYKDNTTDEFVLPTVILKDGKPTGTIKDEDSIIFFNFRPDRARQITRALNDKDFDGFERKRLKLNFITMTQYDKTIENVRIAYKPQSYKNTLGEYVSSLGLNQLRIAETEKYAHVTFFFNGGVETPNKGEDRALIPSPKVATYDLKPEMSAFEVKDEVINRIESNKYDMIILNFANPDMVGHTGVFDAAKTAIEVVDKCVGEISDKILEKEGTVFITADHGNSEQMIDYSTGKPMTAHTTNEVPFVYVSKDAKDKRLKSEGILADIAPTMLTEMGVKIPEEMTGRNLIEGK.

The Mn(2+) site is built by Asp12 and Ser62. Ser62 acts as the Phosphoserine intermediate in catalysis. Residues His123, 153–154, Arg185, Arg191, 260–263, and Lys333 each bind substrate; these read RD and RPDR. The Mn(2+) site is built by Asp400, His404, Asp441, His442, and His460.

The protein belongs to the BPG-independent phosphoglycerate mutase family. In terms of assembly, monomer. Mn(2+) is required as a cofactor.

The catalysed reaction is (2R)-2-phosphoglycerate = (2R)-3-phosphoglycerate. The protein operates within carbohydrate degradation; glycolysis; pyruvate from D-glyceraldehyde 3-phosphate: step 3/5. Catalyzes the interconversion of 2-phosphoglycerate and 3-phosphoglycerate. This is 2,3-bisphosphoglycerate-independent phosphoglycerate mutase from Clostridium tetani (strain Massachusetts / E88).